The sequence spans 302 residues: Eukaryotic translation initiation factor 3 subunit F (302 aa).

The MPN domain occupies 23-165 (IVIEPAVLFS…IKTYVSSPVG (143 aa)). A Phosphoserine modification is found at Ser162.

Belongs to the eIF-3 subunit F family. As to quaternary structure, component of the eukaryotic translation initiation factor 3 (eIF-3) complex. The eIF-3 complex appears to include tif32/eif3a, SPAC25G10.08/eif3b, tif33/eif3c, SPBC4C3.07/eif3f, tif35/eif3g and sum1/eif3i. This set of common subunits may also associate exclusively with either moe1/eif3d and int6/eif3e, or with SPAC821.05/eif3h and SPAC1751.03/eif3m. The eIF-3 complex may also include SPAC3A12.13c/eif3j.

The protein localises to the cytoplasm. Functionally, component of the eukaryotic translation initiation factor 3 (eIF-3) complex, which is involved in protein synthesis of a specialized repertoire of mRNAs and, together with other initiation factors, stimulates binding of mRNA and methionyl-tRNAi to the 40S ribosome. The eIF-3 complex specifically targets and initiates translation of a subset of mRNAs involved in cell proliferation. The protein is Eukaryotic translation initiation factor 3 subunit F of Schizosaccharomyces pombe (strain 972 / ATCC 24843) (Fission yeast).